Consider the following 378-residue polypeptide: tRNA-specific 2-thiouridylase MnmA (378 aa).

Residues glycine 9 to serine 16 and methionine 35 each bind ATP. The segment at asparagine 94 to aspartate 96 is interaction with target base in tRNA. The Nucleophile role is filled by cysteine 99. Cysteine 99 and cysteine 195 are joined by a disulfide. Glycine 123 is a binding site for ATP. Positions lysine 145–glutamine 147 are interaction with tRNA. The Cysteine persulfide intermediate role is filled by cysteine 195. The segment at arginine 307 to tyrosine 308 is interaction with tRNA.

The protein belongs to the MnmA/TRMU family.

Its subcellular location is the cytoplasm. The enzyme catalyses S-sulfanyl-L-cysteinyl-[protein] + uridine(34) in tRNA + AH2 + ATP = 2-thiouridine(34) in tRNA + L-cysteinyl-[protein] + A + AMP + diphosphate + H(+). Catalyzes the 2-thiolation of uridine at the wobble position (U34) of tRNA, leading to the formation of s(2)U34. The polypeptide is tRNA-specific 2-thiouridylase MnmA (Xanthomonas axonopodis pv. citri (strain 306)).